The sequence spans 295 residues: 4-diphosphocytidyl-2-C-methyl-D-erythritol kinase (295 aa).

The active site involves K25. 108 to 118 (PMGSGLGGGSS) contributes to the ATP binding site. The active site involves D150.

Belongs to the GHMP kinase family. IspE subfamily.

It catalyses the reaction 4-CDP-2-C-methyl-D-erythritol + ATP = 4-CDP-2-C-methyl-D-erythritol 2-phosphate + ADP + H(+). It participates in isoprenoid biosynthesis; isopentenyl diphosphate biosynthesis via DXP pathway; isopentenyl diphosphate from 1-deoxy-D-xylulose 5-phosphate: step 3/6. Functionally, catalyzes the phosphorylation of the position 2 hydroxy group of 4-diphosphocytidyl-2C-methyl-D-erythritol. In Pasteurella multocida (strain Pm70), this protein is 4-diphosphocytidyl-2-C-methyl-D-erythritol kinase.